The following is a 72-amino-acid chain: UPF0729 protein C18orf32 homolog (72 aa).

The interval 1–33 is necessary for its localzation to the endoplasmic reticulum and lipid droplets; the sequence is MVCIPCIVIPVLLWIFKKFLEPYIYPVVSRIWP. The disordered stretch occupies residues 36–72; that stretch reads AVQQSGDKNMSKVDCKGAGTNGLPTKGPTEVSDKKKD.

This sequence belongs to the UPF0729 family. As to quaternary structure, interacts with DERL1 and AMFR. Post-translationally, undergoes ER-associated degradation (ERAD).

Its subcellular location is the endoplasmic reticulum. The protein resides in the lipid droplet. In terms of biological role, may activate the NF-kappa-B signaling pathway. The sequence is that of UPF0729 protein C18orf32 homolog from Mus musculus (Mouse).